The following is a 262-amino-acid chain: Conserved oligomeric Golgi complex subunit 2 (262 aa).

Component of the conserved oligomeric Golgi (COG or Sec34/Sec35) complex which consists of eight different proteins COG1-COG8. The COG complex interacts with the Rab GTPase YPT1, the Glogi SNAREs GOS1, SEC22, SED5, VTI1 and YKT6 and the COPI coatomer subunit gamma SEC21.

Its subcellular location is the golgi apparatus membrane. Its function is as follows. Acts as a component of the peripheral membrane COG complex that is involved in intra-Golgi protein trafficking. COG is located at the cis-Golgi, and regulates tethering of retrograde intra-Golgi vesicles and possibly a number of other membrane trafficking events. COG2 is required for ER to Golgi vesicle docking. Not essential for viability. This Saccharomyces cerevisiae (strain ATCC 204508 / S288c) (Baker's yeast) protein is Conserved oligomeric Golgi complex subunit 2 (COG2).